A 503-amino-acid chain; its full sequence is Maturase K (503 aa).

This sequence belongs to the intron maturase 2 family. MatK subfamily.

It localises to the plastid. The protein localises to the chloroplast. Functionally, usually encoded in the trnK tRNA gene intron. Probably assists in splicing its own and other chloroplast group II introns. This chain is Maturase K, found in Lathyrus vestitus (Pacific pea).